We begin with the raw amino-acid sequence, 133 residues long: ATP synthase epsilon chain, chloroplastic (133 aa).

The protein belongs to the ATPase epsilon chain family. As to quaternary structure, F-type ATPases have 2 components, CF(1) - the catalytic core - and CF(0) - the membrane proton channel. CF(1) has five subunits: alpha(3), beta(3), gamma(1), delta(1), epsilon(1). CF(0) has three main subunits: a, b and c.

It localises to the plastid. The protein resides in the chloroplast thylakoid membrane. In terms of biological role, produces ATP from ADP in the presence of a proton gradient across the membrane. The sequence is that of ATP synthase epsilon chain, chloroplastic from Eucalyptus globulus subsp. globulus (Tasmanian blue gum).